Consider the following 230-residue polypeptide: Large ribosomal subunit protein uL1c (230 aa).

This sequence belongs to the universal ribosomal protein uL1 family. As to quaternary structure, part of the 50S ribosomal subunit.

It is found in the plastid. Its subcellular location is the chloroplast. In terms of biological role, binds directly to 23S rRNA. Might be involved in E site tRNA release (Potential). In Phaeodactylum tricornutum (strain CCAP 1055/1), this protein is Large ribosomal subunit protein uL1c (rpl1).